The primary structure comprises 61 residues: UPF0370 protein Spro_3503 (61 aa).

The chain crosses the membrane as a helical span at residues 3-23; it reads WLADYWWIILLILVGMIISGI. The segment covering 38–48 has biased composition (basic and acidic residues); that stretch reads KPELPPHRDNN. Residues 38–61 are disordered; the sequence is KPELPPHRDNNAEWDDDDDWPKKK. A compositionally biased stretch (acidic residues) spans 49-61; it reads AEWDDDDDWPKKK.

Belongs to the UPF0370 family.

Its subcellular location is the cell membrane. The protein is UPF0370 protein Spro_3503 of Serratia proteamaculans (strain 568).